A 307-amino-acid chain; its full sequence is Probable GTP 3',8-cyclase (307 aa).

Positions 5-231 (RFGRPVTNLR…MHRRKKYFIP (227 aa)) constitute a Radical SAM core domain. GTP is bound at residue Arg-14. Residues Cys-21, Cys-25, and Cys-28 each contribute to the [4Fe-4S] cluster site. Lys-62 is a GTP binding site. An S-adenosyl-L-methionine-binding site is contributed by Gly-66. Thr-91 serves as a coordination point for GTP. Residue Ser-115 coordinates S-adenosyl-L-methionine. A GTP-binding site is contributed by Lys-151. Met-190 contacts S-adenosyl-L-methionine. Cys-251 and Cys-254 together coordinate [4Fe-4S] cluster. 256–258 (RLR) provides a ligand contact to GTP. Cys-268 is a [4Fe-4S] cluster binding site.

The protein belongs to the radical SAM superfamily. MoaA family. The cofactor is [4Fe-4S] cluster.

It carries out the reaction GTP + AH2 + S-adenosyl-L-methionine = (8S)-3',8-cyclo-7,8-dihydroguanosine 5'-triphosphate + 5'-deoxyadenosine + L-methionine + A + H(+). Its pathway is cofactor biosynthesis; molybdopterin biosynthesis. Its function is as follows. Catalyzes the cyclization of GTP to (8S)-3',8-cyclo-7,8-dihydroguanosine 5'-triphosphate. The polypeptide is Probable GTP 3',8-cyclase (Thermococcus kodakarensis (strain ATCC BAA-918 / JCM 12380 / KOD1) (Pyrococcus kodakaraensis (strain KOD1))).